The primary structure comprises 269 residues: Tryptophan synthase alpha chain (269 aa).

Catalysis depends on proton acceptor residues Glu-49 and Asp-60.

The protein belongs to the TrpA family. In terms of assembly, tetramer of two alpha and two beta chains.

It carries out the reaction (1S,2R)-1-C-(indol-3-yl)glycerol 3-phosphate + L-serine = D-glyceraldehyde 3-phosphate + L-tryptophan + H2O. It participates in amino-acid biosynthesis; L-tryptophan biosynthesis; L-tryptophan from chorismate: step 5/5. Functionally, the alpha subunit is responsible for the aldol cleavage of indoleglycerol phosphate to indole and glyceraldehyde 3-phosphate. This chain is Tryptophan synthase alpha chain, found in Ectopseudomonas mendocina (strain ymp) (Pseudomonas mendocina).